The chain runs to 87 residues: Small ribosomal subunit protein bS20 (87 aa).

The interval 1-22 (MANSAGSKKRARQAVKSRAHNG) is disordered. Residues 7-19 (SKKRARQAVKSRA) show a composition bias toward basic residues.

This sequence belongs to the bacterial ribosomal protein bS20 family.

In terms of biological role, binds directly to 16S ribosomal RNA. This is Small ribosomal subunit protein bS20 from Marinomonas sp. (strain MWYL1).